The chain runs to 563 residues: MAQEVSEYLSQNPRVAAWVETLRCEGETDKHWRHRREFLLRNAGDLVPATDETADAESGARTRQLQQLVSFSMAWANHVFLGCRYPQKVMDKILSMAEGIKVTDAPIHTTRDELVAKVKKRGISSSNEGVEEPSKKRAVEGKNNSSVERDHGKKSAKTDRSAAQQENSSPSRGSSTKSESGGTSARSSSSGSHQDSATSEGDRSVCSQSSSNSSQVTAGSGKALESEAPHKRGSASFVSSLLKSSMNSHMTQSTDNRQQSGSPKKGALEGSSGSASQSSSEIEVPLLGSSGSAEVELPLLSCKSSSETASSGLTSKSSSEANISSSVSKNSSSSGSSLLTPQSSSTNPSLLTSKSTAQVAASLLATKSGASLGSVSQLAAKSGSQSSTSQLPSKSTSQASESSVKFACRKLTNEDIKQKQPFFNRLYKTVAWKLVAVGGFSPTVNHGELLNAAIEALKATLDVFFVPLKELADLPQNKSSQESIVCELRCKSVYLGTGCGKSKENAKAVASREALKLFLKKKVVVKICKRKYRGSEIEDLVLLDEEARPVNLPPALKHPQELL.

Position 2 is an N-acetylalanine (A2). Residues 19 to 126 (VETLRCEGET…KVKKRGISSS (108 aa)) form the XRN2-binding (XTBD) domain. Disordered stretches follow at residues 122–289 (GISS…LLGS) and 304–351 (SSSE…PSLL). S124 bears the Phosphoserine mark. Residues 147–160 (VERDHGKKSAKTDR) are compositionally biased toward basic and acidic residues. Low complexity-rich tracts occupy residues 168–216 (SSPS…SSQV) and 234–248 (SASFVSSLLKSSMNS). K177 is covalently cross-linked (Glycyl lysine isopeptide (Lys-Gly) (interchain with G-Cter in SUMO1)). S234 is modified (phosphoserine). Positions 249–262 (HMTQSTDNRQQSGS) are enriched in polar residues. Residues 270 to 280 (GSSGSASQSSS) are compositionally biased toward low complexity. Position 340 is a phosphothreonine (T340). Residue S371 is modified to Phosphoserine. The region spanning 445–520 (NHGELLNAAI…SREALKLFLK (76 aa)) is the DRBM domain.

It belongs to the CARF family. In terms of assembly, interacts with CDKN2A/p14ARF, p53/TP53 and MDM2. Interacts with CHEK2 and MAPK3. Interacts with XRN2. In terms of processing, may be ubiquitinated.

The protein resides in the nucleus. It localises to the nucleoplasm. Functionally, regulates DNA damage response and cell proliferation in a dose-dependent manner through a number of signaling pathways involved in cell proliferation, apoptosis and senescence. This Mus musculus (Mouse) protein is CDKN2A-interacting protein (Cdkn2aip).